The following is a 244-amino-acid chain: Nuclear protein UL4 homolog (244 aa).

Residues 193–227 (RPDDQTTPTPTPHQYTSQRRQPETNCPSSPQPAFF) are disordered. Polar residues predominate over residues 205–220 (HQYTSQRRQPETNCPS).

Belongs to the alphaherpesvirinae HHV-1 UL4 family.

It is found in the host nucleus. The chain is Nuclear protein UL4 homolog from Varicella-zoster virus (strain Dumas) (HHV-3).